The chain runs to 325 residues: Germination protease (325 aa).

Positions 1–7 (MYNVRTD) are excised as a propeptide.

This sequence belongs to the peptidase A25 family. In terms of assembly, homotetramer. Autoproteolytically processed. The inactive tetrameric zymogen termed p46 autoprocesses to a smaller form termed p41, which is active only during spore germination.

It carries out the reaction Endopeptidase action with P4 Glu or Asp, P1 preferably Glu &gt; Asp, P1' hydrophobic and P2' Ala.. Initiates the rapid degradation of small, acid-soluble proteins during spore germination. This is Germination protease from Clostridium perfringens (strain 13 / Type A).